Here is a 623-residue protein sequence, read N- to C-terminus: Glutathione import ATP-binding protein GsiA (623 aa).

2 consecutive ABC transporter domains span residues 15–269 and 314–564; these read VENL…RALL and LRVR…RKLL. ATP contacts are provided by residues 49–56 and 357–364; these read GESGSGKS.

It belongs to the ABC transporter superfamily. Glutathione importer (TC 3.A.1.5.11) family. The complex is composed of two ATP-binding proteins (GsiA), two transmembrane proteins (GsiC and GsiD) and a solute-binding protein (GsiB).

The protein localises to the cell inner membrane. It carries out the reaction glutathione(out) + ATP + H2O = glutathione(in) + ADP + phosphate + H(+). Its function is as follows. Part of the ABC transporter complex GsiABCD involved in glutathione import. Responsible for energy coupling to the transport system. This is Glutathione import ATP-binding protein GsiA from Shigella dysenteriae serotype 1 (strain Sd197).